Here is a 553-residue protein sequence, read N- to C-terminus: Transcriptional regulator HilA (553 aa).

Residues 11 to 107 constitute a DNA-binding region (ompR/PhoB-type); that stretch reads NKKFVFDDFI…LYGQGYRFNR (97 aa). A 4-aspartylphosphate modification is found at Asp62. A TPR repeat occupies 372–405; that stretch reads ADIKYYYGWNLFMAGQLEEALQTINECLKLDPTR.

In terms of biological role, the main transcriptional regulator of the Salmonella pathogenicity island 1 (SPI1) gene expression. Activates the expression of invasion genes by a direct action at their promoters and also indirectly by increasing the level of invF. Also binds upstream of prgH and directly activates the expression of prgHIJK operon. This Salmonella typhi protein is Transcriptional regulator HilA (hilA).